The sequence spans 117 residues: Large ribosomal subunit protein uL24 (117 aa).

The protein belongs to the universal ribosomal protein uL24 family. Part of the 50S ribosomal subunit.

Its function is as follows. One of two assembly initiator proteins, it binds directly to the 5'-end of the 23S rRNA, where it nucleates assembly of the 50S subunit. One of the proteins that surrounds the polypeptide exit tunnel on the outside of the subunit. The sequence is that of Large ribosomal subunit protein uL24 from Nostoc punctiforme (strain ATCC 29133 / PCC 73102).